Reading from the N-terminus, the 457-residue chain is Peptidyl-prolyl cis-trans isomerase FKBP5 (457 aa).

Position 1 is an N-acetylmethionine (M1). The disordered stretch occupies residues 1-26 (MTTDEGAKNSRGNPAATVAEQGEDVT). K28 is modified (N6-acetyllysine). 2 PPIase FKBP-type domains span residues 50 to 138 (GDRV…LDFK) and 165 to 251 (GARV…KSFE). TPR repeat units lie at residues 268-301 (AAIV…LEME), 317-350 (LAAF…DSAN), and 351-384 (EKGL…NPQN). The segment at 421–457 (AKEEANKAMSKKTSEGVTNEKLTASHAVEEEKPEGHV) is disordered. Residue S445 is modified to Phosphoserine. The span at 447 to 457 (AVEEEKPEGHV) shows a compositional bias: basic and acidic residues.

As to quaternary structure, part of a heteromultimeric cytoplasmic complex with HSP90AA1, HSPA1A/HSPA1B and steroid receptors. Upon ligand binding dissociates from the complex and FKBP4 takes its place. Interacts with functionally mature heterooligomeric progesterone receptor complexes along with HSP90 and TEBP. Interacts with NR3C1. Interacts with Akt/AKT1 and PHLPP1; enhancing dephosphorylation and subsequent activation of Akt/AKT1. Interacts with IFI44L; this interaction modulates the kinase activity of IKBKB and IKBKE. Interacts with IKBKB and IKBKE. In terms of processing, acetylation impairs ability to promote interaction between Akt/AKT1 and PHLPP1. Deacetylation by SIRT7 promotes interaction between Akt/AKT1 and PHLPP1, leading to suppress Akt/AKT1 activation. Post-translationally, ubiquitinated, leading to degradation in a proteasome-dependent manner. Deubiquitinated by USP49, leading to stabilization.

It is found in the cytoplasm. The protein resides in the nucleus. The enzyme catalyses [protein]-peptidylproline (omega=180) = [protein]-peptidylproline (omega=0). Inhibited by both FK506 and rapamycin. Its function is as follows. Immunophilin protein with PPIase and co-chaperone activities. Component of unligated steroid receptors heterocomplexes through interaction with heat-shock protein 90 (HSP90). Plays a role in the intracellular trafficking of heterooligomeric forms of steroid hormone receptors maintaining the complex into the cytoplasm when unliganded. Acts as a regulator of Akt/AKT1 activity by promoting the interaction between Akt/AKT1 and PHLPP1, thereby enhancing dephosphorylation and subsequent activation of Akt/AKT1. Interacts with IKBKE and IKBKB which facilitates IKK complex assembly leading to increased IKBKE and IKBKB kinase activity, NF-kappaB activation, and IFN production. The sequence is that of Peptidyl-prolyl cis-trans isomerase FKBP5 (FKBP5) from Saimiri boliviensis boliviensis (Bolivian squirrel monkey).